The chain runs to 420 residues: Glucose-1-phosphate adenylyltransferase (420 aa).

Residues tyrosine 107, glycine 172, 187-188, and serine 205 contribute to the alpha-D-glucose 1-phosphate site; that span reads EK.

The protein belongs to the bacterial/plant glucose-1-phosphate adenylyltransferase family. In terms of assembly, homotetramer.

It carries out the reaction alpha-D-glucose 1-phosphate + ATP + H(+) = ADP-alpha-D-glucose + diphosphate. Its pathway is glycan biosynthesis; glycogen biosynthesis. Involved in the biosynthesis of ADP-glucose, a building block required for the elongation reactions to produce glycogen. Catalyzes the reaction between ATP and alpha-D-glucose 1-phosphate (G1P) to produce pyrophosphate and ADP-Glc. This Rhizobium radiobacter (Agrobacterium tumefaciens) protein is Glucose-1-phosphate adenylyltransferase.